Consider the following 549-residue polypeptide: MQAEKTPRNIKAARGTTLRCKGWQQETILRLLENNIENGERPEDLVIYMNAAKAARDWDCFDAIVRTLKTMEADETLVVQSGKPVGLFRTHAFAPRVLLANGNVAGRWAGDANMFELEKRGLTILPGMTAACWQYIGSQGIVQGTYQSFVSAAEQYFGGSLAGRIILTAGAGGMGGAQPLAGKMAGAATLVVDVDPVSLERRLNTGYLDVIATSVDDALARIRTLAAEREGGSVGIVGNAADVFEALHRKELRPDIVTDQCMVDPYRGYVPSGLSPAEAAQLVRTDPEQALALAAATLARHARAMLRFRDDGAVVFEYGNTLRARSVAAGVPEAGELPSFVTLFIRPLFCRGIGPFRWIAASGDPKDIAAIDGIIESTFAEGHMIRQWIPMARKYIQFQGLPARIGWLGHGERSKLALLVNEAVADGRISAPIAFTRDHLDAGSVASPYRETEKMQDGSDAVSDWPLLNAMLACSNGASLVALHSNGDKSASAGQTAIADGTPMAAFKLKSVLDADTGIGVIRYADAGYEVARETRALHGLGIEIGGGE.

NAD(+) contacts are provided by Met49, Gly173, Met174, Gly175, Asp193, Ser198, Asn239, Ala240, Gln260, Val270, and Tyr318.

This sequence belongs to the urocanase family. S-methyl thiourocanate hydratase subfamily. It depends on NAD(+) as a cofactor.

The catalysed reaction is S-methyl-(E)-thiourocanate + H2O = S-methyl-thiohydantoin-5-propanoate. In terms of biological role, hydratase involved in the catabolism of S-methyl ergothioneine. Catalyzes the 1,4-addition of H(2)O to S-methyl thiourocanate, leading to the formation of S-methyl-thiohydantoin-5-propanoate, the second step in S-methyl ergothioneine degradation. Cannot use urocanate or thiourocanate as substrate. The polypeptide is S-methyl thiourocanate hydratase (Variovorax sp. (strain JCM 16519 / RA8)).